The following is a 508-amino-acid chain: Probable ligand-gated ion channel 46 (508 aa).

Residues 1–18 form the signal peptide; the sequence is MQYLQFLSLVVLLLMCHA. Residues 19-274 are Extracellular-facing; sequence RKSVYRRNSP…FEFKRRAGWY (256 aa). Asn-65, Asn-134, Asn-175, and Asn-201 each carry an N-linked (GlcNAc...) asparagine glycan. A disulfide bridge connects residues Cys-190 and Cys-204. A helical membrane pass occupies residues 275–295; the sequence is ILQAYLPTYLTICISWISFAL. The Cytoplasmic segment spans residues 296–301; it reads GSKAIP. Residues 302–321 form a helical membrane-spanning segment; it reads ARTMLGVNSLLAMTFQFGNI. Over 322 to 335 the chain is Extracellular; it reads IRNLPRVSYVKAID. A helical membrane pass occupies residues 336–356; sequence VWMLSCMTFVFCSLLELAWVG. The Cytoplasmic segment spans residues 357 to 480; the sequence is YLSREEEPTS…KQRREILAHK (124 aa). The tract at residues 374–407 is disordered; the sequence is AQVAPKPCHPPPVQQNANNSSVHRRQKQPKNEEE. A helical membrane pass occupies residues 481-501; it reads IDSVSVFMFPFLFVLFNIAYW. Residues 502 to 508 lie on the Extracellular side of the membrane; sequence QHYLRGY.

Belongs to the ligand-gated ion channel (TC 1.A.9) family. As to expression, expressed in the nervous system, with high expression in cholinergic motor neurons and weak expression in GABAergic motor neurons.

Its subcellular location is the presynaptic cell membrane. The protein resides in the cell projection. It localises to the axon. It is found in the cytoplasmic vesicle. The protein localises to the secretory vesicle. Its subcellular location is the synaptic vesicle. Its function is as follows. Probable component of a ligand-gated anion channel. Negatively regulates synaptic transmission and synaptic vesicle release in response to acetylcholine in cholinergic motor neurons. Role in synaptic vesicle release kinetics may be in association with the ligand-gated ion channel protein acc-4. The protein is Probable ligand-gated ion channel 46 of Caenorhabditis elegans.